Reading from the N-terminus, the 95-residue chain is Co-chaperonin GroES (95 aa).

It belongs to the GroES chaperonin family. Heptamer of 7 subunits arranged in a ring. Interacts with the chaperonin GroEL.

Its subcellular location is the cytoplasm. In terms of biological role, together with the chaperonin GroEL, plays an essential role in assisting protein folding. The GroEL-GroES system forms a nano-cage that allows encapsulation of the non-native substrate proteins and provides a physical environment optimized to promote and accelerate protein folding. GroES binds to the apical surface of the GroEL ring, thereby capping the opening of the GroEL channel. This Desulfosudis oleivorans (strain DSM 6200 / JCM 39069 / Hxd3) (Desulfococcus oleovorans) protein is Co-chaperonin GroES.